The chain runs to 389 residues: Chaperone protein DnaJ (389 aa).

The J domain occupies 6-70 (DYYEILGLSK…EKRAQYDRFG (65 aa)). Residues 131–213 (GVRKDIDIPR…CSGAGRVRSR (83 aa)) form a CR-type zinc finger. Zn(2+)-binding residues include C144, C147, C161, C164, C187, C190, C201, and C204. CXXCXGXG motif repeat units follow at residues 144–151 (CSTCSGTG), 161–168 (CPNCGGTG), 187–194 (CSACHGRG), and 201–208 (CPTCSGAG). The tract at residues 145-167 (STCSGTGAKPGTSPKRCPNCGGT) is disordered. The interval 351–389 (LSNGKKPEAEERSRSDKQKSEKPRKSKGLFEKVKDAFES) is disordered. Basic and acidic residues predominate over residues 355–389 (KKPEAEERSRSDKQKSEKPRKSKGLFEKVKDAFES).

This sequence belongs to the DnaJ family. As to quaternary structure, homodimer. Zn(2+) serves as cofactor.

It localises to the cytoplasm. Functionally, participates actively in the response to hyperosmotic and heat shock by preventing the aggregation of stress-denatured proteins and by disaggregating proteins, also in an autonomous, DnaK-independent fashion. Unfolded proteins bind initially to DnaJ; upon interaction with the DnaJ-bound protein, DnaK hydrolyzes its bound ATP, resulting in the formation of a stable complex. GrpE releases ADP from DnaK; ATP binding to DnaK triggers the release of the substrate protein, thus completing the reaction cycle. Several rounds of ATP-dependent interactions between DnaJ, DnaK and GrpE are required for fully efficient folding. Also involved, together with DnaK and GrpE, in the DNA replication of plasmids through activation of initiation proteins. This chain is Chaperone protein DnaJ, found in Methanosarcina mazei (strain ATCC BAA-159 / DSM 3647 / Goe1 / Go1 / JCM 11833 / OCM 88) (Methanosarcina frisia).